Consider the following 284-residue polypeptide: 4-hydroxybenzoate octaprenyltransferase (284 aa).

The next 9 helical transmembrane spans lie at isoleucine 19–methionine 39, phenylalanine 42–isoleucine 62, isoleucine 93–leucine 113, threonine 114–phenylalanine 134, histidine 136–alanine 156, leucine 161–threonine 181, leucine 209–tyrosine 229, phenylalanine 235–leucine 252, and alanine 264–tryptophan 284.

It belongs to the UbiA prenyltransferase family. It depends on Mg(2+) as a cofactor.

The protein resides in the cell inner membrane. The enzyme catalyses all-trans-octaprenyl diphosphate + 4-hydroxybenzoate = 4-hydroxy-3-(all-trans-octaprenyl)benzoate + diphosphate. Its pathway is cofactor biosynthesis; ubiquinone biosynthesis. Functionally, catalyzes the prenylation of para-hydroxybenzoate (PHB) with an all-trans polyprenyl group. Mediates the second step in the final reaction sequence of ubiquinone-8 (UQ-8) biosynthesis, which is the condensation of the polyisoprenoid side chain with PHB, generating the first membrane-bound Q intermediate 3-octaprenyl-4-hydroxybenzoate. This chain is 4-hydroxybenzoate octaprenyltransferase, found in Vibrio atlanticus (strain LGP32) (Vibrio splendidus (strain Mel32)).